The chain runs to 391 residues: Putative alpha-ketoglutarate-dependent sulfonate dioxygenase (391 aa).

H204 and D206 together coordinate Fe cation. The 2-oxoglutarate site is built by T231 and W338. Residue H353 coordinates Fe cation. R364 and R368 together coordinate 2-oxoglutarate.

This sequence belongs to the TfdA dioxygenase family. Requires Fe(2+) as cofactor.

It participates in organosulfur degradation; alkanesulfonate degradation. Its function is as follows. Acts as an alpha-ketoglutarate-dependent dioxygenase active on sulfonates. The chain is Putative alpha-ketoglutarate-dependent sulfonate dioxygenase from Schizosaccharomyces pombe (strain 972 / ATCC 24843) (Fission yeast).